A 298-amino-acid polypeptide reads, in one-letter code: uncharacterized protein (298 aa).

The next 10 helical transmembrane spans lie at 5–25 (ILFG…MSAF), 36–56 (MENV…IYPF), 76–96 (VVVG…ISLA), 97–117 (TATA…PLLL), 124–144 (STLI…DPSV), 147–167 (VGPV…LAYI), 181–201 (VILA…FIDI), 216–236 (ILWI…LTYA), 244–264 (IIAP…LYLG), and 272–292 (SSLG…PALL). Residues 17–141 (LCFGIMSAFV…GIVGVVLISD (125 aa)) form the EamA 1 domain. The EamA 2 domain maps to 183–288 (LAFAFGMSLL…ILCSGLLIAL (106 aa)).

It belongs to the EamA transporter family.

It localises to the cell membrane. This is an uncharacterized protein from Helicobacter pylori (strain ATCC 700392 / 26695) (Campylobacter pylori).